Reading from the N-terminus, the 1079-residue chain is Electrogenic sodium bicarbonate cotransporter 1 (1079 aa).

The tract at residues 1-62 (MEDEAVLDRG…EKKEKERISE (62 aa)) is required for interaction with AHCYL1. The Cytoplasmic segment spans residues 1-466 (MEDEAVLDRG…FASDFYDALN (466 aa)). The residue at position 2 (Glu-2) is a Phosphoserine. Tyr-30 is subject to Phosphotyrosine. The span at 39–52 (YRRRRRHKRKAGHK) shows a compositional bias: basic residues. The segment at 39–78 (YRRRRRHKRKAGHKEKKEKERISENYSDKSDVENADESSS) is disordered. Residues 53–70 (EKKEKERISENYSDKSDV) show a composition bias toward basic and acidic residues. Residues Ser-61, Ser-65, Ser-68, Ser-223, Ser-232, Ser-233, and Ser-245 each carry the phosphoserine modification. Residues 235–266 (SRMFSNPDNGSPAMTHRNLTSSSLNDISDKPE) form a disordered region. Residues Thr-249 and Thr-254 each carry the phosphothreonine modification. The segment covering 251-260 (RNLTSSSLND) has biased composition (polar residues). 3 positions are modified to phosphoserine: Ser-256, Ser-257, and Ser-262. The helical transmembrane segment at 467 to 491 (IQALSAILFIYLATVTNAITFGGLL) threads the bilayer. Topologically, residues 492 to 501 (GDATDNMQGV) are extracellular. The chain crosses the membrane as a helical span at residues 502-520 (LESFLGTAVSGAIFCLFAG). A topological domain (cytoplasmic) is located at residue Gln-521. The discontinuously helical transmembrane segment at 522 to 542 (PLTILSSTGPVLVFERLLFNF) threads the bilayer. At 543 to 550 (SKDHSFDY) the chain is on the extracellular side. A helical transmembrane segment spans residues 551 to 571 (LEFRLWIGLWSAFMCLILVAT). At 572–585 (DASFLVQYFTRFTE) the chain is on the cytoplasmic side. A helical membrane pass occupies residues 586–609 (EGFSSLISFIFIYDAFKKMIKLAD). N-linked (GlcNAc) asparagine glycans are attached at residues Ile-597 and Phe-617. The Extracellular portion of the chain corresponds to 610–692 (YYPINSDFRV…GNNCDFVPDI (83 aa)). The helical transmembrane segment at 693-710 (TLMSFILFLGTYTSSMAM) threads the bilayer. Residues 711–725 (KKFKTSRYFPTTARK) lie on the Cytoplasmic side of the membrane. A helical membrane pass occupies residues 726 to 745 (LISDFAIILSILIFCVIDAL). The Extracellular portion of the chain corresponds to 746–779 (VGVDTPKLIVPSEFKPTSPHRGWFVPPFGGNPWW). The interval 748 to 779 (VDTPKLIVPSEFKPTSPHRGWFVPPFGGNPWW) is interaction with CA4. The chain crosses the membrane as a helical span at residues 780–807 (VCLAAAIPALLVTILIFMDQQITAVIVN). Over 808-819 (RKEHKLKKGAGY) the chain is Cytoplasmic. Residues 820–836 (HLDLFWVAILMVVCSFM) form a helical membrane-spanning segment. Residue Ala-837 is a topological domain, extracellular. The discontinuously helical transmembrane segment at 838 to 855 (LPWYVAATVISIAHIDSL) threads the bilayer. Residues 856 to 877 (KMETETSAPGEQPKFLGVREQR) are Cytoplasmic-facing. Residues 878 to 894 (VTGTLVFILTGLSVFMA) traverse the membrane as a helical segment. Residues 895–901 (PILKFIP) are Extracellular-facing. Residues 902 to 918 (MPVLYGVFLYMGVASLN) form a helical membrane-spanning segment. Over 919 to 960 (GVQFMDRLKLLLMPLKHQPDFIYLRHVPLRRVHLFTSLQVLC) the chain is Cytoplasmic. The discontinuously helical intramembrane region spans 961–986 (LALLWILKSTVAAIIFPVMILALVAV). Over 987–1079 (RKGMDYLFSQ…STFLERHTSC (93 aa)) the chain is Cytoplasmic. The tract at residues 1002–1004 (LDD) is CA2-binding. Positions 1012 to 1079 (KKKEDEKKKK…STFLERHTSC (68 aa)) are disordered. Phosphoserine is present on residues Ser-1026 and Ser-1029. At Ser-1026 the chain carries Phosphoserine; by PKA. The tract at residues 1030-1033 (DNDD) is CA2-binding. Ser-1034 and Ser-1044 each carry phosphoserine. Residues 1057 to 1059 (FLS) are required for basolateral targeting. Phosphoserine is present on residues Asp-1060, Leu-1064, Ser-1069, and Ser-1078. Basic and acidic residues predominate over residues 1062–1079 (KPLDRERSSTFLERHTSC).

It belongs to the anion exchanger (TC 2.A.31) family. As to quaternary structure, homodimer. Interacts with CA2/carbonic anhydrase 2 and CA4/carbonic anhydrase 4 which may regulate transporter activity. Isoform 1 but not isoform 2 interacts with AHCYL1 (via PEST domain when phosphorylated); the interaction increases SLC4A4 isoform 1 activity. Interacts with AHCYL2. Phosphorylation of Ser-1026 by PKA increases the binding of CA2 and changes the Na(+):HCO3(-) stoichiometry of the transporter from 3:1 to 2:1. Phosphorylated in presence of STK39 and dephosphorylated in presence of PP1 phosphatase; phosphorylation seems to inhibit SLC4A4 activity. In terms of processing, N-glycosylation is not necessary for the transporter basic functions. In terms of tissue distribution, specifically expressed in kidney and to a lower extent in liver, lung, spleen, brain, skeletal muscle and heart. In kidney, expressed in proximal tubules at the corticomedullary junction. Isoform 2 is specifically expressed in kidney. Isoform 1 is expressed in kidney and pancreas while isoform 3 is specifically expressed in brain (at protein level). In brain, isoform 1 is expressed in astrocytes while isoform 3 is expressed in neurons (at protein level). In the eye, isoform 1 is expressed in cornea, conjunctiva, lens epithelium, ciliary bodies and retina while isoform 2 is detected only in the conjunctiva.

The protein resides in the basolateral cell membrane. The protein localises to the cell membrane. It catalyses the reaction 2 hydrogencarbonate(out) + Na(+)(out) = 2 hydrogencarbonate(in) + Na(+)(in). It carries out the reaction 3 hydrogencarbonate(out) + Na(+)(out) = 3 hydrogencarbonate(in) + Na(+)(in). With respect to regulation, inhibited by 4,4'-diisothiocyanatostilbene-2,2'-disulfonic acid (DIDS). Functionally, electrogenic sodium/bicarbonate cotransporter with a Na(+):HCO3(-) stoichiometry varying from 1:2 to 1:3. May regulate bicarbonate influx/efflux at the basolateral membrane of cells and regulate intracellular pH. In Rattus norvegicus (Rat), this protein is Electrogenic sodium bicarbonate cotransporter 1 (Slc4a4).